A 240-amino-acid polypeptide reads, in one-letter code: Sugar fermentation stimulation protein homolog (240 aa).

It belongs to the SfsA family.

The protein is Sugar fermentation stimulation protein homolog of Natranaerobius thermophilus (strain ATCC BAA-1301 / DSM 18059 / JW/NM-WN-LF).